A 232-amino-acid polypeptide reads, in one-letter code: T-cell surface glycoprotein CD1b-3 (232 aa).

Residues 1–201 (GLQEFQFEYP…LYWGHPMYIG (201 aa)) lie on the Extracellular side of the membrane. Disulfide bonds link cysteine 19–cysteine 83, cysteine 48–cysteine 62, and cysteine 123–cysteine 178. Asparagine 45 carries N-linked (GlcNAc...) asparagine glycosylation. The 111-residue stretch at 84 to 194 (PRYLLGVLDA…LGDQDIILYW (111 aa)) folds into the Ig-like domain. A helical transmembrane segment spans residues 202–222 (LIFVAIIVPSLILLICLALWF). Residues 223 to 232 (WRRWSYQTVL) are Cytoplasmic-facing.

As to quaternary structure, heterodimer with B2M (beta-2-microglobulin). Interacts with saposin C.

The protein localises to the cell membrane. The protein resides in the endosome membrane. It is found in the lysosome membrane. Its function is as follows. Antigen-presenting protein that binds self and non-self lipid and glycolipid antigens and presents them to T-cell receptors on natural killer T-cells. The protein is T-cell surface glycoprotein CD1b-3 of Ovis aries (Sheep).